The chain runs to 81 residues: Small serum protein 4 (81 aa).

A signal peptide spans 1 to 19 (MKVFFILIIFSFTLATCQG). 3 cysteine pairs are disulfide-bonded: cysteine 21/cysteine 74, cysteine 41/cysteine 66, and cysteine 64/cysteine 73.

It belongs to the beta-microseminoprotein family.

The protein localises to the secreted. Functionally, shows an slight inhibitory effect toward the metalloproteinase brevilysin H6, but does not inhibit the metalloproteinases thermolysin, HR1A and HR1B. The chain is Small serum protein 4 from Protobothrops flavoviridis (Habu).